The following is a 194-amino-acid chain: GTP cyclohydrolase 1 (194 aa).

Zn(2+) contacts are provided by Cys83, His86, and Cys155.

This sequence belongs to the GTP cyclohydrolase I family. As to quaternary structure, toroid-shaped homodecamer, composed of two pentamers of five dimers.

The enzyme catalyses GTP + H2O = 7,8-dihydroneopterin 3'-triphosphate + formate + H(+). Its pathway is cofactor biosynthesis; 7,8-dihydroneopterin triphosphate biosynthesis; 7,8-dihydroneopterin triphosphate from GTP: step 1/1. This Streptococcus pyogenes protein is GTP cyclohydrolase 1 (folE).